Consider the following 286-residue polypeptide: MNINEVINYAKGXNLDTIEALLILELILKTKKELIIANIKKSLTKKEKKLFFDQIDKIEKGIPIHYILQKKEFMGIEFSLNKHVLIPRFDTECLAEEALIQIQQNGFKKILDLCCGSGCIGLSIAYYIRKKVILSDISTKALQIVEKNTKKLKLEKFVEIIHSNLLKCIKGKLDIIITNPPYLNKEELEIKNKIKKEPTKALLGFGKDGLNISRKILNQAKEKLSPNGLIIIESAPWQIKSLKDFAIKKGFSHLKTIYDLEKRARALILGQRDDTSIRNCTFNQDK.

Asp136 and Asn179 together coordinate S-adenosyl-L-methionine. Position 179–182 (179–182) interacts with substrate; it reads NPPY.

The protein belongs to the protein N5-glutamine methyltransferase family. PrmC subfamily.

The enzyme catalyses L-glutaminyl-[peptide chain release factor] + S-adenosyl-L-methionine = N(5)-methyl-L-glutaminyl-[peptide chain release factor] + S-adenosyl-L-homocysteine + H(+). Functionally, methylates the class 1 translation termination release factors RF1/PrfA and RF2/PrfB on the glutamine residue of the universally conserved GGQ motif. The polypeptide is Release factor glutamine methyltransferase (Borreliella burgdorferi (strain ATCC 35210 / DSM 4680 / CIP 102532 / B31) (Borrelia burgdorferi)).